We begin with the raw amino-acid sequence, 2262 residues long: MKRHQFKSCIFELREILREIKNSRYFLDSWTKFDSVVSFTHIFFHQERFVKLLGPQTWSVLLSRDSQGSTSNRYFTIKGVVLLVVAVLIYRINNRNMVERKNLYLMGLLPIPMNSIGPRNDTLEESFWSPNINRLIVSLLYLPKGKKISESCFMDPKESTWVLPITKKCIMPESNWGSRWWRNWIGKKRDSSCKISNETVAGIEISFKEKDIKYLEFLFVSYMDDPIRKDHGWELFDRVSPRKKRNIINLNSGQLFEILAKHLICYLMSAFREKRPIEVEGFLKQQGAEATIQSNDIEHVSHLFSRNKWDISLQNCAQFHVWQFHQDLFVSWGKNHHESDFLRNVSRENLIWLDNMWLVNKDRFFSKVRNVSSNIQYDSTRSIFVQVTDSSQLKGSSDQSRENFDSISNEDSEYHTLINQTEIQQLKERLILWDPSSLQTERTEIESDRFPKYPSGYSSMSRLFTEREKQMNNHLFPEKIEEFLGNPTRSIRSFFSDRWSELHLVSNATERFARDHKLLKKQQDVFSFVPSRRSEKKEMVDIFKIITYLQNTVSIHPISSDPGCDMVPRDEPDMDSSNKISFLNKNPFCDLFHLFHDRNKGRYTLHHDFESEERFQEMADLFTLSITEPDLVYHKGFAFSMDSYGLDQKKFLNEVFNSRDESKKNSLLVLPHIFYEENESFYRRIRKKWVRISCRNGLEDPKPKIVVFASNNIMEAVNQYRLIRNLIQIQYSTYGYIRNLSNRFSLMNRSDRNFEYGIQRDQIGNDTLNHITIMKYMINQHLSNVKKSQKKWFDPLISRTERSMNRDPNAYRYKWSNGSKNFQEHLEHFVSEQKNRFQVVFDRLRINQHSIDWSKVIDKQDLSKSLHFFLSKSLLFLSKSLTFFFVSIGNIPIHRSEIHIYELKGPNDQLCNQLLESIGVQIVHLNKLKPFLLDDHDTSQRSKFLINGGTISAFLFNKIPKWMIDSLHTRNNRRKFFDNTDSYFSMISHDRDNWLNPVKPFHRSSLISSFYKANLLRFLNNPHHFCFYSNKRFPFYAEKTRIDNYDLTYGQFLHTYGQFLHISFIRNKIFSLCVGKKKHVFLERDTISPIESQVSDIFIPNDFPQSGDETYNLYKSQPLSTYCQPLSDMNLSDSEGKNLHQYLSFNSNMGLIHTPCSEKYLPSAKKRNLCLKKCVEKGQMYRAFQRDSAFSNLSKWNLFQTYMPWFLTSAGCKYINLILLDTFSDPLPILSSSHKFVSFFYDITHGSDISWSILQIPLWAILPQWNLISEISSKCLQNLLLPEEMIHRNNESPVPLKWTHLRSPNAREFLYSILFLLLVAGYLVRTHLLFISRVSSELQTELEKIKSLMIQSYMIELRKLLDRYPPPELNSFWLKNLFLVALEQLGDSLEEIRSSASGGNMLLGGGPTYGVKSIRSKKKDLNINLIDIIYLISIIPNPINPITFSRNTRHLSRTSKEIYSLIRKNVNSDWIDDQIESWVANSDLIDDEEREFLVQFSTLTTEKRIDQILLSLTHSDHLSKNDSGYQMIEQPGSIYLRYLVDIHKKYLMNYEFNRSCLAERRIFLAHYQTITYSQTPCGANSSHFPSHGKPFSLRLALPPSRGILVIGFIGTGRSYFVKYRVTNSYVPFITVFPNKFLDDNKGYLIDDIDIDDSDDIDIDDSDDIDDDLDTELLTMPNVLTMYMTPKIDRFEITLPLELAKAMSPCIIWIPNIHDLYVNESNYLSLGLLVNHLPRDCERCSTRNILVIASTHIPQKVDPALIAPNKSNTCIKIRRLLIPQQRKHFFILSYTRGFRLEKKMSHTNGFGSITMGSNARDLVALTNEVLSISITQKKSIIDTNTIRSALHRQTWDLRSQVRSVQDHEILFYQIGRAVAQNVLLSNCSIDPISIYMKKKSCKEGDSYLSKWYFELGTSMKKLTILLYLLSCSAGSVAQDLWSPPGPDEKNWITSYGFVENDSDLVHGLLESALVGYSRTECSQFDNDRVTLLLRSEPRNQLDMMQNGSCSIVDQRFLYEKYESGFEEGEGEGTLDLQQIEEDEDLFNHIVWAPRLWRPHGNLFDCIERPNKLGFPYWVRSFRGKKIIYHKEDKLQENDSEFLQSGTVQYQTRDRSSKEQGFFRISQFIWDPADQFFFLFKDQPFVSVFSRREFFADEEMSKGLITSQTNPPTSIYKRWLIKNTQEKHFELLIHRQRWLRTNTNSSLSNGSFRSNTLSESYQYLSNLFLSNNGTLLDQMTKTLLRKRWLFPDEMKHLIHAPGERFPIP.

1607-1614 (GFIGTGRS) contacts ATP.

This sequence belongs to the Ycf2 family.

The protein localises to the plastid. It localises to the chloroplast stroma. In terms of biological role, probable ATPase of unknown function. Its presence in a non-photosynthetic plant (Epifagus virginiana) and experiments in tobacco indicate that it has an essential function which is probably not related to photosynthesis. The chain is Protein Ycf2 from Nuphar advena (Common spatterdock).